The sequence spans 501 residues: Glycerol kinase (501 aa).

ADP is bound at residue T11. T11, T12, and S13 together coordinate ATP. T11 is a sn-glycerol 3-phosphate binding site. ADP is bound at residue R15. Residues R81, E82, Y133, and D242 each coordinate sn-glycerol 3-phosphate. Positions 81, 82, 133, 242, and 243 each coordinate glycerol. Residues T264 and G307 each contribute to the ADP site. ATP-binding residues include T264, G307, Q311, and G409. ADP-binding residues include G409 and N413.

This sequence belongs to the FGGY kinase family.

It carries out the reaction glycerol + ATP = sn-glycerol 3-phosphate + ADP + H(+). The protein operates within polyol metabolism; glycerol degradation via glycerol kinase pathway; sn-glycerol 3-phosphate from glycerol: step 1/1. With respect to regulation, inhibited by fructose 1,6-bisphosphate (FBP). Functionally, key enzyme in the regulation of glycerol uptake and metabolism. Catalyzes the phosphorylation of glycerol to yield sn-glycerol 3-phosphate. The protein is Glycerol kinase of Borrelia garinii subsp. bavariensis (strain ATCC BAA-2496 / DSM 23469 / PBi) (Borreliella bavariensis).